A 518-amino-acid chain; its full sequence is Crotonobetaine/carnitine--CoA ligase (518 aa).

Belongs to the ATP-dependent AMP-binding enzyme family.

The enzyme catalyses 4-(trimethylamino)butanoate + ATP + CoA = 4-(trimethylamino)butanoyl-CoA + AMP + diphosphate. It catalyses the reaction crotonobetaine + ATP + CoA = crotonobetainyl-CoA + AMP + diphosphate. The catalysed reaction is (R)-carnitine + ATP + CoA = (R)-carnitinyl-CoA + AMP + diphosphate. Its pathway is amine and polyamine metabolism; carnitine metabolism. Its function is as follows. Catalyzes the transfer of CoA to carnitine, generating the initial carnitinyl-CoA needed for the CaiB reaction cycle. Also has activity toward crotonobetaine and gamma-butyrobetaine. The polypeptide is Crotonobetaine/carnitine--CoA ligase (Proteus mirabilis (strain HI4320)).